Here is a 100-residue protein sequence, read N- to C-terminus: Urease subunit gamma (100 aa).

The protein belongs to the urease gamma subunit family. As to quaternary structure, heterotrimer of UreA (gamma), UreB (beta) and UreC (alpha) subunits. Three heterotrimers associate to form the active enzyme.

The protein localises to the cytoplasm. The catalysed reaction is urea + 2 H2O + H(+) = hydrogencarbonate + 2 NH4(+). Its pathway is nitrogen metabolism; urea degradation; CO(2) and NH(3) from urea (urease route): step 1/1. This is Urease subunit gamma from Synechocystis sp. (strain ATCC 27184 / PCC 6803 / Kazusa).